We begin with the raw amino-acid sequence, 371 residues long: Tetraacyldisaccharide 4'-kinase (371 aa).

63-70 (AVGGAGKT) lines the ATP pocket.

The protein belongs to the LpxK family.

It catalyses the reaction a lipid A disaccharide + ATP = a lipid IVA + ADP + H(+). It functions in the pathway glycolipid biosynthesis; lipid IV(A) biosynthesis; lipid IV(A) from (3R)-3-hydroxytetradecanoyl-[acyl-carrier-protein] and UDP-N-acetyl-alpha-D-glucosamine: step 6/6. Its function is as follows. Transfers the gamma-phosphate of ATP to the 4'-position of a tetraacyldisaccharide 1-phosphate intermediate (termed DS-1-P) to form tetraacyldisaccharide 1,4'-bis-phosphate (lipid IVA). The sequence is that of Tetraacyldisaccharide 4'-kinase from Anaeromyxobacter sp. (strain Fw109-5).